Reading from the N-terminus, the 513-residue chain is ATP synthase subunit alpha (513 aa).

Position 169-176 (glycine 169–threonine 176) interacts with ATP.

Belongs to the ATPase alpha/beta chains family. In terms of assembly, F-type ATPases have 2 components, CF(1) - the catalytic core - and CF(0) - the membrane proton channel. CF(1) has five subunits: alpha(3), beta(3), gamma(1), delta(1), epsilon(1). CF(0) has three main subunits: a(1), b(2) and c(9-12). The alpha and beta chains form an alternating ring which encloses part of the gamma chain. CF(1) is attached to CF(0) by a central stalk formed by the gamma and epsilon chains, while a peripheral stalk is formed by the delta and b chains.

The protein localises to the cell inner membrane. The enzyme catalyses ATP + H2O + 4 H(+)(in) = ADP + phosphate + 5 H(+)(out). Its function is as follows. Produces ATP from ADP in the presence of a proton gradient across the membrane. The alpha chain is a regulatory subunit. In Vibrio vulnificus (strain CMCP6), this protein is ATP synthase subunit alpha.